The sequence spans 858 residues: DNA mismatch repair protein MutS (858 aa).

609-616 contributes to the ATP binding site; the sequence is GPNMSGKS.

Belongs to the DNA mismatch repair MutS family.

This protein is involved in the repair of mismatches in DNA. It is possible that it carries out the mismatch recognition step. This protein has a weak ATPase activity. This Enterococcus faecalis (strain ATCC 700802 / V583) protein is DNA mismatch repair protein MutS.